Consider the following 149-residue polypeptide: Large ribosomal subunit protein uL15A (149 aa).

The interval 21-40 (RIGKHRKQRGGRGNAGGQHH) is disordered.

This sequence belongs to the universal ribosomal protein uL15 family. Component of the large ribosomal subunit.

The protein resides in the cytoplasm. Its subcellular location is the cytosol. It localises to the endoplasmic reticulum. Functionally, component of the large ribosomal subunit. The ribosome is a large ribonucleoprotein complex responsible for the synthesis of proteins in the cell. The protein is Large ribosomal subunit protein uL15A (rpl27a-1) of Entamoeba histolytica (strain ATCC 30459 / HM-1:IMSS / ABRM).